The chain runs to 153 residues: Ribonuclease H (153 aa).

Residues 1–141 (MKLVEIFTDG…CDELAKAGAN (141 aa)) form the RNase H type-1 domain. Mg(2+)-binding residues include D9, E47, D69, and D133.

It belongs to the RNase H family. In terms of assembly, monomer. The cofactor is Mg(2+).

Its subcellular location is the cytoplasm. The catalysed reaction is Endonucleolytic cleavage to 5'-phosphomonoester.. Functionally, endonuclease that specifically degrades the RNA of RNA-DNA hybrids. In Actinobacillus pleuropneumoniae serotype 5b (strain L20), this protein is Ribonuclease H.